The chain runs to 709 residues: G1/S-specific cyclin-E (709 aa).

Disordered regions lie at residues 1–30, 43–149, 162–205, 221–289, and 642–709; these read MGLNAKSVCSTSSTEPNGSIVTTAPSNGEV, ISSS…NLSS, VDGQ…GSKQ, TVVT…PKHQ, and ALRA…RSNP. Composition is skewed to polar residues over residues 7-29, 61-70, and 91-106; these read SVCSTSSTEPNGSIVTTAPSNGE, PSTSFSSASQ, and CDSQNLAASTAATSNG. Phosphoserine is present on residues S114, S115, S117, and S129. Positions 162-175 are enriched in polar residues; that stretch reads VDGQSTQELLSIRS. Phosphoserine is present on residues S187, S192, S195, and S198. Positions 187–199 are enriched in pro residues; the sequence is SPLPDSPDSPPSP. Acidic residues predominate over residues 228 to 258; the sequence is EDDDLLDDSCEDYSYDEDDEDDVEEEDDDVE. Residues 260 to 277 show a composition bias toward polar residues; sequence YSSTISPASSGCSQQQAV. T651 carries the post-translational modification Phosphothreonine. Over residues 677–709 the composition is skewed to low complexity; it reads SSTTTCCNTAASNKGGKSSSNNSVTSCSSRSNP.

The protein belongs to the cyclin family. Cyclin E subfamily. As to quaternary structure, interacts with a member of the CDK2/CDK protein kinases to form a serine/threonine kinase holoenzyme complex. The cyclin subunit imparts substrate specificity to the complex. Interacts (via C-terminus) with Z600 (via C-terminus). As to expression, isoform II is ubiquitous in early embryos and, prior to mitosis 14, is rapidly degraded in all cells except the pole (germ) cells. Expressed during G1 phase in proliferating peripheral nervous system cells. Constitutive expression in embryonic cycles lacking a G1 phase.

Its subcellular location is the nucleus. In terms of biological role, essential for the control of the cell cycle at the G1/S (start) transition. Targeted by archipelago for degradation by the SFC ubiquitin ligase complex. The protein is G1/S-specific cyclin-E (CycE) of Drosophila melanogaster (Fruit fly).